Here is a 152-residue protein sequence, read N- to C-terminus: Arginine repressor (152 aa).

The protein belongs to the ArgR family.

The protein localises to the cytoplasm. It participates in amino-acid biosynthesis; L-arginine biosynthesis [regulation]. Functionally, regulates arginine biosynthesis genes. This is Arginine repressor from Thermotoga sp. (strain RQ2).